A 473-amino-acid polypeptide reads, in one-letter code: MSMKLHVKTWGCQMNEYDSSKMADLLNSTNGYISVEHAEDADVVLLNTCSIREKAQEKVFHQLGRWKKLKVNKPNLVIGVGGCVASQEGKAIRSRAPFVDIVFGPQTLHRLPEMIKEVQENKGTVVDVSFPEIEKFDSLPEPKADGATAFVSIMEGCSKYCSFCVVPYTRGEEVSRPLDDVLLEVAQLAEQGVREVTLLGQNVNSYLGATYDGDTCSFAELLRFVASIDGIDRLRYVTSNPIDFSDEIIAVYEDTPELVNFLHLPVQAGSDRILAAMKRGHTVAQYKDQIARLLQVRPELTVSSDFIIGFPNETDHDFEQTMDLIKYINFDTSYSFIYSQRPGTPAADMPDDVTLETKKQRLAILQDRIQQQSQGIGRKMVGSVQRILVEGPSRKNIMELCGRTENNRIVNFEGDHRSIGGFVDVEITEVHTNSIRGKFIRGEAEMNLRESIRPSDIVNKHENKSAVNSYIPA.

The MTTase N-terminal domain maps to 3–120 (MKLHVKTWGC…LPEMIKEVQE (118 aa)). C12, C49, C83, C157, C161, and C164 together coordinate [4Fe-4S] cluster. A Radical SAM core domain is found at 143–375 (KADGATAFVS…QDRIQQQSQG (233 aa)). The 64-residue stretch at 378-441 (RKMVGSVQRI…TNSIRGKFIR (64 aa)) folds into the TRAM domain.

The protein belongs to the methylthiotransferase family. MiaB subfamily. As to quaternary structure, monomer. [4Fe-4S] cluster serves as cofactor.

It is found in the cytoplasm. It catalyses the reaction N(6)-dimethylallyladenosine(37) in tRNA + (sulfur carrier)-SH + AH2 + 2 S-adenosyl-L-methionine = 2-methylsulfanyl-N(6)-dimethylallyladenosine(37) in tRNA + (sulfur carrier)-H + 5'-deoxyadenosine + L-methionine + A + S-adenosyl-L-homocysteine + 2 H(+). Functionally, catalyzes the methylthiolation of N6-(dimethylallyl)adenosine (i(6)A), leading to the formation of 2-methylthio-N6-(dimethylallyl)adenosine (ms(2)i(6)A) at position 37 in tRNAs that read codons beginning with uridine. This is tRNA-2-methylthio-N(6)-dimethylallyladenosine synthase from Psychromonas ingrahamii (strain DSM 17664 / CCUG 51855 / 37).